The following is a 708-amino-acid chain: Leukotoxin translocation ATP-binding protein LktB (708 aa).

Positions 1-126 constitute a Peptidase C39 domain; the sequence is MEANHQRNDL…ACYQGQLILV (126 aa). An ABC transmembrane type-1 domain is found at 155–437; the sequence is FLETLIVSIF…LAQLWQDFQQ (283 aa). The next 5 membrane-spanning stretches (helical) occupy residues 159 to 179, 192 to 212, 270 to 290, 296 to 316, and 389 to 409; these read LIVSIFLQIFALITPLFFQVV, LNIITVALAIVIIFEIVLSGL, ALTSVLDLLFSFIFFAVMWYY, LVILGSLPCYILWSIFISPIL, and VMVINLWLGAHLVISGDLSIG. Residues 469–704 form the ABC transporter domain; the sequence is ISFKNIRFRY…SNGLYSYLHQ (236 aa). 503–510 contacts ATP; the sequence is GRSGSGKS.

The protein belongs to the ABC transporter superfamily. Protein-1 exporter (TC 3.A.1.109) family. As to quaternary structure, homodimer.

The protein resides in the cell inner membrane. The enzyme catalyses ATP + H2O + proteinSide 1 = ADP + phosphate + proteinSide 2.. In terms of biological role, part of the ABC transporter complex LktBD involved in leukotoxin export. Transmembrane domains (TMD) form a pore in the inner membrane and the ATP-binding domain (NBD) is responsible for energy generation. This chain is Leukotoxin translocation ATP-binding protein LktB (lktB), found in Mannheimia haemolytica (Pasteurella haemolytica).